A 213-amino-acid chain; its full sequence is Thiopurine S-methyltransferase (213 aa).

Positions 10, 45, 66, and 121 each coordinate S-adenosyl-L-methionine.

Belongs to the class I-like SAM-binding methyltransferase superfamily. TPMT family.

It is found in the cytoplasm. The catalysed reaction is S-adenosyl-L-methionine + a thiopurine = S-adenosyl-L-homocysteine + a thiopurine S-methylether.. The sequence is that of Thiopurine S-methyltransferase from Aliivibrio fischeri (strain MJ11) (Vibrio fischeri).